A 435-amino-acid polypeptide reads, in one-letter code: Cytochrome c oxidase subunit 3 (435 aa).

7 helical membrane-spanning segments follow: residues V70–I90, L96–F116, L132–W152, V176–I196, L325–F345, F360–I380, and L412–W432.

This sequence belongs to the cytochrome c oxidase subunit 3 family. Component of the cytochrome c oxidase (complex IV, CIV), a multisubunit enzyme composed of a catalytic core of 3 subunits and several supernumerary subunits. The complex exists as a monomer or a dimer and forms supercomplexes (SCs) in the inner mitochondrial membrane with ubiquinol-cytochrome c oxidoreductase (cytochrome b-c1 complex, complex III, CIII).

It is found in the mitochondrion inner membrane. The enzyme catalyses 4 Fe(II)-[cytochrome c] + O2 + 8 H(+)(in) = 4 Fe(III)-[cytochrome c] + 2 H2O + 4 H(+)(out). Component of the cytochrome c oxidase, the last enzyme in the mitochondrial electron transport chain which drives oxidative phosphorylation. The respiratory chain contains 3 multisubunit complexes succinate dehydrogenase (complex II, CII), ubiquinol-cytochrome c oxidoreductase (cytochrome b-c1 complex, complex III, CIII) and cytochrome c oxidase (complex IV, CIV), that cooperate to transfer electrons derived from NADH and succinate to molecular oxygen, creating an electrochemical gradient over the inner membrane that drives transmembrane transport and the ATP synthase. Cytochrome c oxidase is the component of the respiratory chain that catalyzes the reduction of oxygen to water. Electrons originating from reduced cytochrome c in the intermembrane space (IMS) are transferred via the dinuclear copper A center (CU(A)) of subunit 2 and heme A of subunit 1 to the active site in subunit 1, a binuclear center (BNC) formed by heme A3 and copper B (CU(B)). The BNC reduces molecular oxygen to 2 water molecules using 4 electrons from cytochrome c in the IMS and 4 protons from the mitochondrial matrix. The sequence is that of Cytochrome c oxidase subunit 3 (cox3) from Dictyostelium discoideum (Social amoeba).